Here is a 1055-residue protein sequence, read N- to C-terminus: Protein SUPPRESSOR OF QUENCHING 1, chloroplastic (1055 aa).

The N-terminal 56 residues, 1–56 (MALKLTSPPSVFSQSRRLSSSSLIPIRSKSTFTGFRSRTGVYLSKTTALQSSTKLS), are a transit peptide targeting the chloroplast. N-acetylvaline is present on V57. The Stromal segment spans residues 59 to 327 (AESPAATIAT…FQGSRRDILR (269 aa)). D80 serves as the catalytic Nucleophile. Mg(2+) is bound by residues D80 and D82. Residue D80 coordinates substrate. The active-site Proton donor is the D82. Substrate is bound by residues E89, 118–122 (TGEAK), 141–144 (AKER), and 183–189 (SSADRIK). D242 is a Mg(2+) binding site. The chain crosses the membrane as a helical span at residues 328-345 (YGSLGIALSCVYFAATNW). Over 346 to 1055 (KAMQYASPKA…AGGLQLQGTR (710 aa)) the chain is Lumenal. One can recognise a Thioredoxin domain in the interval 359-536 (ALVGAKSPSF…LDDVVAAALT (178 aa)). A disulfide bond links C431 and C434. NHL repeat units lie at residues 565 to 597 (PLKFPGKLAIDTLNNRLFISDSNHNRIIVTDLE), 611 to 647 (GFQDGSFEDAAFNRPQGLAYNAKKNLLYVADTENHAL), 673 to 712 (GRKGTKQLLNSPWDVCFEPVNEKVYIAMAGQHQIWEYSVL), 802 to 832 (LQHPLGVLCANDGQIYLTDSYNHKIKKLDPV), and 854 to 887 (GAQLSEPAGLAITENGRLFVADTNNSLIRYIDLN).

This sequence in the N-terminal section; belongs to the HAD-like hydrolase superfamily. It in the C-terminal section; belongs to the thioredoxin family. It depends on Mg(2+) as a cofactor.

The protein localises to the plastid. It localises to the chloroplast thylakoid membrane. Functionally, required to maintain light harvesting efficiency, especially during nonphotochemical quenching (NPQ) recovery, via the regulation of chlorophyll excited-state lifetime probably by preventing the formation of a slowly reversible form of antenna quenching. The sequence is that of Protein SUPPRESSOR OF QUENCHING 1, chloroplastic from Arabidopsis thaliana (Mouse-ear cress).